The chain runs to 410 residues: MNYPIKEIRSDFPILSEKINNSPLIYLDNAASSQKPKCVLQREIIYSSKEHSAVHRGIHTLSKNATKNMEDIRSKIAKFINAKSDSEIIFVKGTTEGINLVANTWGETFIKKGDNIVITQMEHHANIVPWQLLSMRKKVDIKYIPLLPSGKLDICKIDDIINNNTRIFCITHVSNILGTCNLIEKIIKKIKNNYDIKVLIDGAQAIMHMKIDVQKIDCDFYVFSGHKIYGPSGIGVLYGKKKLLKKMPPWEGGGGMIKKVCLFSGTTFNEIPWRFEAGSPNISGIIGLGKSIEYVKKIGIKKIQKYEKKLIKYALLKIKNIPNIKIYSSEINTSIIPFNLKGCHSYDVGILLDKYGVAIRTGHHCSMPIMNFFKVHSMCRISVAMYSDESDIDNFIKSLLKVQKFLRRFN.

N6-(pyridoxal phosphate)lysine is present on Lys-227. Residue Cys-365 is the Cysteine persulfide intermediate of the active site.

This sequence belongs to the class-V pyridoxal-phosphate-dependent aminotransferase family. Csd subfamily. As to quaternary structure, homodimer. Interacts with SufE and the SufBCD complex composed of SufB, SufC and SufD. The interaction with SufE is required to mediate the direct transfer of the sulfur atom from the S-sulfanylcysteine. Pyridoxal 5'-phosphate is required as a cofactor.

The protein resides in the cytoplasm. It catalyses the reaction (sulfur carrier)-H + L-cysteine = (sulfur carrier)-SH + L-alanine. It carries out the reaction L-selenocysteine + AH2 = hydrogenselenide + L-alanine + A + H(+). It participates in cofactor biosynthesis; iron-sulfur cluster biosynthesis. Its function is as follows. Cysteine desulfurases mobilize the sulfur from L-cysteine to yield L-alanine, an essential step in sulfur metabolism for biosynthesis of a variety of sulfur-containing biomolecules. Component of the suf operon, which is activated and required under specific conditions such as oxidative stress and iron limitation. Acts as a potent selenocysteine lyase in vitro, that mobilizes selenium from L-selenocysteine. Selenocysteine lyase activity is however unsure in vivo. This Wigglesworthia glossinidia brevipalpis protein is Cysteine desulfurase.